The sequence spans 64 residues: Large ribosomal subunit protein uL29 (64 aa).

It belongs to the universal ribosomal protein uL29 family.

This chain is Large ribosomal subunit protein uL29, found in Polynucleobacter necessarius subsp. necessarius (strain STIR1).